The sequence spans 382 residues: Gap junction alpha-1 protein (382 aa).

Residues 2-23 (GDWSALGKLLDKVQAYSTAGGK) are Cytoplasmic-facing. At Ser5 the chain carries Phosphoserine. A helical membrane pass occupies residues 24 to 44 (VWLSVLFIFRILLLGTAVESA). Over 45 to 76 (WGDEQSAFRCNTQQPGCENVCYDKSFPISHVR) the chain is Extracellular. 2 disulfides stabilise this stretch: Cys54/Cys192 and Cys187/Cys198. The helical transmembrane segment at 77–97 (FWVLQIIFVSVPTLLYLAHVF) threads the bilayer. At 98 to 155 (YVMRKEEKLNKKEEELKVAQTDGVNVEMHLKQIEIKKFKYGIEEHGKVKMRGGLLRTY) the chain is on the cytoplasmic side. A Glycyl lysine isopeptide (Lys-Gly) (interchain with G-Cter in SUMO) cross-link involves residue Lys144. Residues 156 to 176 (IISILFKSVFEVAFLLIQWYI) form a helical membrane-spanning segment. Residues 177 to 207 (YGFSLSAVYTCKRDPCPHQVDCFLSRPTEKT) are Extracellular-facing. A helical transmembrane segment spans residues 208–228 (IFIIFMLVVSLVSLALNIIEL). Residues 229-382 (FYAFFKGVKD…SRPRPDDLEI (154 aa)) lie on the Cytoplasmic side of the membrane. A Glycyl lysine isopeptide (Lys-Gly) (interchain with G-Cter in SUMO) cross-link involves residue Lys237. Residues 244 to 382 (SDPYHATTGP…SRPRPDDLEI (139 aa)) form an interaction with NOV region. Tyr247 carries the phosphotyrosine modification. Phosphoserine is present on residues Ser255, Ser257, and Ser262. The interaction with UBQLN4 stretch occupies residues 264–382 (KYAYFNGCSS…SRPRPDDLEI (119 aa)). Cys271 bears the S-nitrosocysteine mark. A Phosphothreonine modification is found at Thr275. A phosphoserine mark is found at Ser306 and Ser314. Polar residues predominate over residues 317–332 (QNRMGQAGSTISNSHA). The segment at 317–382 (QNRMGQAGST…SRPRPDDLEI (66 aa)) is disordered. Ser325 is subject to Phosphoserine; by CK1. At Thr326 the chain carries Phosphothreonine. Phosphoserine; by CK1 occurs at positions 328 and 330. The segment covering 342–351 (QNSKKLDAGH) has biased composition (basic and acidic residues). Phosphoserine is present on residues Ser344 and Ser365. Residues 362–374 (RPSSRASSRASSR) are compositionally biased toward low complexity. Ser368 is modified (phosphoserine; by PKC/PRKCG and PKC/PRKCD). A phosphoserine mark is found at Ser369 and Ser373.

The protein belongs to the connexin family. Alpha-type (group II) subfamily. In terms of assembly, a connexon is composed of a hexamer of connexins. Interacts with SGSM3. Interacts with RIC1/CIP150. Interacts with CNST and CSNK1D. Interacts (via C-terminus) with TJP1. Interacts (via C-terminus) with SRC (via SH3 domain). Interacts (not ubiquitinated) with UBQLN4 (via UBA domain). Interacts with NOV. Interacts with TMEM65. Interacts with ANK3/ANKG and PKP2. Post-translationally, phosphorylation at Ser-325, Ser-328 and Ser-330 by CK1 modulates gap junction assembly. Phosphorylated at Ser-368 by PRKCG; phosphorylation induces disassembly of gap junction plaques and inhibition of gap junction activity. Phosphorylation at Ser-368 by PRKCD triggers its internalization into small vesicles leading to proteasome-mediated degradation. In terms of processing, sumoylated with SUMO1, SUMO2 and SUMO3, which may regulate the level of functional Cx43 gap junctions at the plasma membrane. May be desumoylated by SENP1 or SENP2. S-nitrosylation at Cys-271 is enriched at the muscle endothelial gap junction in arteries, it augments channel permeability and may regulate of smooth muscle cell to endothelial cell communication. Post-translationally, acetylated in the developing cortex; leading to delocalization from the cell membrane.

The protein resides in the cell membrane. The protein localises to the cell junction. It is found in the gap junction. It localises to the endoplasmic reticulum. Gap junction protein that acts as a regulator of bladder capacity. A gap junction consists of a cluster of closely packed pairs of transmembrane channels, the connexons, through which materials of low MW diffuse from one cell to a neighboring cell. May play a critical role in the physiology of hearing by participating in the recycling of potassium to the cochlear endolymph. Negative regulator of bladder functional capacity: acts by enhancing intercellular electrical and chemical transmission, thus sensitizing bladder muscles to cholinergic neural stimuli and causing them to contract. May play a role in cell growth inhibition through the regulation of NOV expression and localization. Plays an essential role in gap junction communication in the ventricles. This chain is Gap junction alpha-1 protein (GJA1), found in Sus scrofa (Pig).